The sequence spans 393 residues: 4-O-methyl-glucuronoyl methylesterase (393 aa).

Residues 1 to 19 (MKLSAALLAIAAFANVASA) form the signal peptide. Position 20 is a pyrrolidone carboxylic acid (glutamine 20). An intrachain disulfide couples cysteine 22 to cysteine 56. Asparagine 103 and asparagine 168 each carry an N-linked (GlcNAc...) asparagine glycan. A GXSYXG catalytic site motif motif is present at residues 203 to 208 (GCSRNG). Disulfide bonds link cysteine 204–cysteine 340 and cysteine 236–cysteine 312. Serine 205 acts as the Nucleophile in catalysis. Substrate contacts are provided by lysine 209, glutamine 251, glutamate 259, and tryptophan 303. The Proton donor/acceptor role is filled by histidine 339.

This sequence belongs to the carbohydrate esterase 15 (CE15) family.

The protein localises to the secreted. The catalysed reaction is a 4-O-methyl-alpha-D-glucuronosyl ester derivative + H2O = 4-O-methyl-alpha-D-glucuronate derivative + an alcohol + H(+). Its function is as follows. Glucuronoyl esterase which may play a significant role in biomass degradation, as it is considered to disconnect hemicellulose from lignin through the hydrolysis of the ester bond between 4-O-methyl-D-glucuronic acid residues of glucuronoxylans and aromatic alcohols of lignin. The polypeptide is 4-O-methyl-glucuronoyl methylesterase (Schizophyllum commune (strain H4-8 / FGSC 9210) (Split gill fungus)).